We begin with the raw amino-acid sequence, 429 residues long: UDP-N-acetylglucosamine 1-carboxyvinyltransferase (429 aa).

Lys22–Asn23 contributes to the phosphoenolpyruvate binding site. Arg102 is a UDP-N-acetyl-alpha-D-glucosamine binding site. Cys126 serves as the catalytic Proton donor. At Cys126 the chain carries 2-(S-cysteinyl)pyruvic acid O-phosphothioketal. Residues Arg131 to Leu135, Asp316, and Ile338 each bind UDP-N-acetyl-alpha-D-glucosamine.

The protein belongs to the EPSP synthase family. MurA subfamily.

Its subcellular location is the cytoplasm. It catalyses the reaction phosphoenolpyruvate + UDP-N-acetyl-alpha-D-glucosamine = UDP-N-acetyl-3-O-(1-carboxyvinyl)-alpha-D-glucosamine + phosphate. It functions in the pathway cell wall biogenesis; peptidoglycan biosynthesis. Its function is as follows. Cell wall formation. Adds enolpyruvyl to UDP-N-acetylglucosamine. The sequence is that of UDP-N-acetylglucosamine 1-carboxyvinyltransferase from Methylobacterium nodulans (strain LMG 21967 / CNCM I-2342 / ORS 2060).